A 123-amino-acid polypeptide reads, in one-letter code: MRIQSLLLLGALLAVGSQLPAVFGRKKGEKWGGCPADDGPCLLSVPDQCVEDSQCPLTRKCCYRACFRQCVPRVSVKPGSCPQDQLRCLSPMNHLCHKDSDCSGKKRCCHSACGRDCRDPARG.

Residues 1–24 (MRIQSLLLLGALLAVGSQLPAVFG) form the signal peptide. 2 consecutive WAP domains span residues 27–73 (KGEK…CVPR) and 74–121 (VSVK…RDPA). Intrachain disulfides connect cysteine 34/cysteine 62, cysteine 41/cysteine 66, cysteine 49/cysteine 61, cysteine 55/cysteine 70, cysteine 81/cysteine 109, cysteine 88/cysteine 113, cysteine 96/cysteine 108, and cysteine 102/cysteine 117.

Its subcellular location is the secreted. Putative acid-stable proteinase inhibitor. This chain is WAP four-disulfide core domain protein 5 (WFDC5), found in Papio anubis (Olive baboon).